The chain runs to 647 residues: Acetyl-coenzyme A synthetase (647 aa).

Residues 190–193, threonine 310, and asparagine 334 contribute to the CoA site; that span reads RGGK. Residues 386 to 388, 410 to 415, aspartate 499, and arginine 514 contribute to the ATP site; these read GEP and DTWWQT. Serine 522 is a binding site for CoA. Position 525 (arginine 525) interacts with ATP. 3 residues coordinate Mg(2+): valine 536, histidine 538, and valine 541. Arginine 583 provides a ligand contact to CoA. Residue lysine 608 is modified to N6-acetyllysine.

This sequence belongs to the ATP-dependent AMP-binding enzyme family. The cofactor is Mg(2+). Post-translationally, acetylated. Deacetylation by the SIR2-homolog deacetylase activates the enzyme.

The enzyme catalyses acetate + ATP + CoA = acetyl-CoA + AMP + diphosphate. In terms of biological role, catalyzes the conversion of acetate into acetyl-CoA (AcCoA), an essential intermediate at the junction of anabolic and catabolic pathways. AcsA undergoes a two-step reaction. In the first half reaction, AcsA combines acetate with ATP to form acetyl-adenylate (AcAMP) intermediate. In the second half reaction, it can then transfer the acetyl group from AcAMP to the sulfhydryl group of CoA, forming the product AcCoA. The polypeptide is Acetyl-coenzyme A synthetase (Xanthomonas oryzae pv. oryzae (strain MAFF 311018)).